The primary structure comprises 87 residues: Phosphoribosyl-ATP pyrophosphatase (87 aa).

It belongs to the PRA-PH family.

It localises to the cytoplasm. It catalyses the reaction 1-(5-phospho-beta-D-ribosyl)-ATP + H2O = 1-(5-phospho-beta-D-ribosyl)-5'-AMP + diphosphate + H(+). It functions in the pathway amino-acid biosynthesis; L-histidine biosynthesis; L-histidine from 5-phospho-alpha-D-ribose 1-diphosphate: step 2/9. This is Phosphoribosyl-ATP pyrophosphatase from Thermobifida fusca (strain YX).